A 607-amino-acid polypeptide reads, in one-letter code: Elongation factor 4 (607 aa).

The region spanning 11-193 is the tr-type G domain; sequence EKIRNFSIIA…QIVEKVPAPT (183 aa). GTP contacts are provided by residues 23 to 28 and 140 to 143; these read DHGKST and NKID.

The protein belongs to the TRAFAC class translation factor GTPase superfamily. Classic translation factor GTPase family. LepA subfamily.

Its subcellular location is the cell membrane. It catalyses the reaction GTP + H2O = GDP + phosphate + H(+). Its function is as follows. Required for accurate and efficient protein synthesis under certain stress conditions. May act as a fidelity factor of the translation reaction, by catalyzing a one-codon backward translocation of tRNAs on improperly translocated ribosomes. Back-translocation proceeds from a post-translocation (POST) complex to a pre-translocation (PRE) complex, thus giving elongation factor G a second chance to translocate the tRNAs correctly. Binds to ribosomes in a GTP-dependent manner. This is Elongation factor 4 from Streptococcus pneumoniae serotype 19F (strain G54).